The sequence spans 333 residues: uncharacterized protein (333 aa).

This is an uncharacterized protein from Mycolicibacterium smegmatis (Mycobacterium smegmatis).